The primary structure comprises 521 residues: Type II methyltransferase M.AluI (521 aa).

Positions 8 to 491 constitute an SAM-dependent MTase C5-type domain; it reads YSFVDLFAGI…REHVRRDRAL (484 aa). Cysteine 84 is an active-site residue.

Belongs to the class I-like SAM-binding methyltransferase superfamily. C5-methyltransferase family.

It carries out the reaction a 2'-deoxycytidine in DNA + S-adenosyl-L-methionine = a 5-methyl-2'-deoxycytidine in DNA + S-adenosyl-L-homocysteine + H(+). Its function is as follows. A methylase, recognizes the double-stranded sequence 5'-AGCT-3', methylates C-3 on both strands, and protects the DNA from cleavage by the AluI endonuclease. The sequence is that of Type II methyltransferase M.AluI from Cellulosimicrobium cellulans (Arthrobacter luteus).